The chain runs to 334 residues: Myo-inositol 2-dehydrogenase (334 aa).

It belongs to the Gfo/Idh/MocA family.

The catalysed reaction is myo-inositol + NAD(+) = scyllo-inosose + NADH + H(+). The protein operates within polyol metabolism; myo-inositol metabolism. Its function is as follows. Catalyzes the NAD(+)-dependent oxidation of myo-inositol (MI) to 2-keto-myo-inositol (scyllo-inosose), and thus probably functions in a myo-inositol degradation pathway together with IolM, IolN and IolO. Has no activity with scyllo-inositol and much reduced activity (78-fold lower catalytic efficiency) with 1D-chiro-inositol. The polypeptide is Myo-inositol 2-dehydrogenase (Thermotoga maritima (strain ATCC 43589 / DSM 3109 / JCM 10099 / NBRC 100826 / MSB8)).